We begin with the raw amino-acid sequence, 473 residues long: C3a anaphylatoxin chemotactic receptor (473 aa).

Topologically, residues 1-23 (MESFTADTNSTDLHSRPLFKPQD) are extracellular. N-linked (GlcNAc...) asparagine glycosylation occurs at Asn9. Residues 24–46 (IASMVILSLTCLLGLPGNGLVLW) traverse the membrane as a helical segment. The Cytoplasmic portion of the chain corresponds to 47-57 (VAGVKMKRTVN). A helical transmembrane segment spans residues 58–80 (TVWFLHLTLADFLCCLSLPFSVA). Topologically, residues 81 to 96 (HLILRGHWPYGLFLCK) are extracellular. Cys95 and Cys172 are disulfide-bonded. A helical transmembrane segment spans residues 97-118 (LIPSVIILNMFASVFLLTAISL). At 119–139 (DRCLMVHKPIWCQNHRSVRTA) the chain is on the cytoplasmic side. The chain crosses the membrane as a helical span at residues 140-160 (FAVCGCVWVVTFVMCIPVFVY). The Extracellular portion of the chain corresponds to 161 to 329 (RDLLVVDDYS…TPQVAITISR (169 aa)). Residues Tyr174 and Tyr184 each carry the sulfotyrosine modification. A glycan (N-linked (GlcNAc...) asparagine) is linked at Asn201. Residues 233-252 (FHTSPEDPFSQDSASQQPHY) form a disordered region. Tyr308 carries the sulfotyrosine modification. The chain crosses the membrane as a helical span at residues 330-349 (LVVGFLVPFFIMITCYSLIV). Topologically, residues 350 to 366 (FRMRKTNLTKSRNKTLR) are cytoplasmic. A helical transmembrane segment spans residues 367-389 (VAVAVVTVFFVCWIPYHIVGILL). Topologically, residues 390 to 406 (VITDQESALREVVLPWD) are extracellular. The helical transmembrane segment at 407–427 (HMSIALASANSCFNPFLYALL) threads the bilayer. Over 428-473 (GKDFRKKARQSVKGILEAAFSEELTHSTSCTQDKAPSKRNHMSTDV) the chain is Cytoplasmic. A Phosphoserine modification is found at Ser448. Thr452 is modified (phosphothreonine).

It belongs to the G-protein coupled receptor 1 family. In terms of assembly, interacts with VGF-derived peptide TLQP-21.

The protein localises to the cell membrane. Its function is as follows. Receptor for the chemotactic and inflammatory peptide anaphylatoxin C3a. This receptor stimulates chemotaxis, granule enzyme release and superoxide anion production. The sequence is that of C3a anaphylatoxin chemotactic receptor (C3ar1) from Rattus norvegicus (Rat).